Consider the following 134-residue polypeptide: ATP synthase epsilon chain, chloroplastic (134 aa).

This sequence belongs to the ATPase epsilon chain family. In terms of assembly, F-type ATPases have 2 components, CF(1) - the catalytic core - and CF(0) - the membrane proton channel. CF(1) has five subunits: alpha(3), beta(3), gamma(1), delta(1), epsilon(1). CF(0) has three main subunits: a, b and c.

The protein localises to the plastid. It is found in the chloroplast thylakoid membrane. Its function is as follows. Produces ATP from ADP in the presence of a proton gradient across the membrane. The chain is ATP synthase epsilon chain, chloroplastic from Phalaenopsis aphrodite subsp. formosana (Moth orchid).